The primary structure comprises 169 residues: uncharacterized protein (169 aa).

Low complexity predominate over residues 144–157 (AEAHSASPASSDSS). Residues 144-169 (AEAHSASPASSDSSPLTNNIRPISIM) form a disordered region. The segment covering 158–169 (PLTNNIRPISIM) has biased composition (polar residues).

This is an uncharacterized protein from Saccharomyces cerevisiae (strain ATCC 204508 / S288c) (Baker's yeast).